Here is a 215-residue protein sequence, read N- to C-terminus: Chaperone protein TorD (215 aa).

It belongs to the TorD/DmsD family. TorD subfamily.

It localises to the cytoplasm. In terms of biological role, involved in the biogenesis of TorA. Acts on TorA before the insertion of the molybdenum cofactor and, as a result, probably favors a conformation of the apoenzyme that is competent for acquiring the cofactor. In Aliivibrio fischeri (strain ATCC 700601 / ES114) (Vibrio fischeri), this protein is Chaperone protein TorD.